The chain runs to 450 residues: Protein tweety homolog 1 (450 aa).

Over 1 to 43 the chain is Extracellular; that stretch reads MGAPPGYRPSAWVHLLHQLPRADFQLRPVPSAFAPQEREYQQA. Residues 44–64 traverse the membrane as a helical segment; the sequence is LLLVAALAGLGLGLSLIFIAV. Over 65–88 the chain is Cytoplasmic; that stretch reads YLIRFCCCRPPEPPGAKSPPPGGG. The chain crosses the membrane as a helical span at residues 89–109; the sequence is CVTWNCIAALLVGCAGIGVGF. Residues 110-214 lie on the Extracellular side of the membrane; sequence YGNSETSDGV…DVSFVEEYRW (105 aa). The N-linked (GlcNAc...) asparagine glycan is linked to N130. The chain crosses the membrane as a helical span at residues 215–235; sequence LAYVLLLLLELLVCLFTLLGL. The Cytoplasmic segment spans residues 236-240; that stretch reads ARQSK. A helical membrane pass occupies residues 241 to 261; it reads WLVIVMTVMSLLVLVLSWGSM. Residues 262-390 lie on the Extracellular side of the membrane; it reads GLEAATAVGL…LRGLCEDTLE (129 aa). Intrachain disulfides connect C275–C385 and C303–C370. N-linked (GlcNAc...) asparagine glycosylation is found at N284 and N355. Residues 391 to 411 form a helical membrane-spanning segment; the sequence is GLLFLLLFSLLSAGALATVLC. At 412 to 450 the chain is on the cytoplasmic side; sequence SLPRAWALFPPSDDYEDTDDDDPFNPQESKRFVQWQSSI. The disordered stretch occupies residues 427 to 450; sequence EDTDDDDPFNPQESKRFVQWQSSI. S440 is subject to Phosphoserine.

It belongs to the tweety family. As to quaternary structure, homotetramer; disulfide-linked. Homodimer. In terms of processing, N-glycosylated. Contains high-mannose, hybrid and complex oligosaccharides.

The protein localises to the cell membrane. It carries out the reaction chloride(in) = chloride(out). The enzyme catalyses L-glutamate(out) = L-glutamate(in). In terms of biological role, calcium-independent, swelling-dependent volume-regulated anion channel (VRAC-swell) which plays a pivotal role in the process of regulatory volume decrease (RVD) in the brain through the efflux of anions like chloride and organic osmolytes like glutamate. The chain is Protein tweety homolog 1 (TTYH1) from Bos taurus (Bovine).